The following is a 795-amino-acid chain: Lon protease 1 (795 aa).

The Lon N-terminal domain maps to 9-204; sequence LPVLPLRNTV…RVLALLLRDL (196 aa). 360–367 contacts ATP; that stretch reads GPPGVGKT. A Lon proteolytic domain is found at 596–777; the sequence is EPQVGAAQGL…GEVLKLLLLP (182 aa). Residues Ser-683 and Lys-726 contribute to the active site.

This sequence belongs to the peptidase S16 family. As to quaternary structure, homohexamer. Organized in a ring with a central cavity.

It localises to the cytoplasm. It carries out the reaction Hydrolysis of proteins in presence of ATP.. In terms of biological role, ATP-dependent serine protease that mediates the selective degradation of mutant and abnormal proteins as well as certain short-lived regulatory proteins. Required for cellular homeostasis and for survival from DNA damage and developmental changes induced by stress. Degrades polypeptides processively to yield small peptide fragments that are 5 to 10 amino acids long. Binds to DNA in a double-stranded, site-specific manner. The chain is Lon protease 1 from Thermus thermophilus (strain ATCC BAA-163 / DSM 7039 / HB27).